The sequence spans 332 residues: Formamidase (332 aa).

The CN hydrolase domain maps to 14–259; that stretch reads FLAALIQYPV…WEIVTAEVYP (246 aa). Glutamate 60 (proton acceptor) is an active-site residue. The Proton donor role is filled by lysine 132. Cysteine 165 (nucleophile) is an active-site residue.

It belongs to the carbon-nitrogen hydrolase superfamily. Aliphatic amidase family.

The enzyme catalyses formamide + H2O = formate + NH4(+). Its function is as follows. Is an aliphatic amidase with a restricted substrate specificity, as it only hydrolyzes formamide. This chain is Formamidase, found in Bacillus cereus (strain Q1).